The chain runs to 173 residues: MNLRKFLGGTVLVAFMLFSYSEQNQVNVLCSTDWFMVTVHPFLLNNDVYVHFYEVHLGLGCPPNHVHPHFYQFHYRVTECGIRIKAVSPDVVIYSSEIHYASKGSSTKYVIPVSCAAPRRSPWLTKPYSAKAPSNNMGATPKNDTSYHVFTLPEPSEQPNCSCPPYVYNQKSM.

An N-terminal signal peptide occupies residues 1 to 23 (MNLRKFLGGTVLVAFMLFSYSEQ).

This sequence belongs to the PLAC1 family. As to expression, expressed in placenta.

It is found in the secreted. Its function is as follows. May play a role in placental development. This chain is Placenta-specific protein 1, found in Mus musculus (Mouse).